The chain runs to 414 residues: Histidine--tRNA ligase (414 aa).

It belongs to the class-II aminoacyl-tRNA synthetase family. As to quaternary structure, homodimer.

It is found in the cytoplasm. It catalyses the reaction tRNA(His) + L-histidine + ATP = L-histidyl-tRNA(His) + AMP + diphosphate + H(+). The protein is Histidine--tRNA ligase of Anaeromyxobacter dehalogenans (strain 2CP-1 / ATCC BAA-258).